A 49-amino-acid chain; its full sequence is Lysozyme C (49 aa).

The C-type lysozyme domain maps to 1 to 49; that stretch reads SKMKKCEFAKIAKEQHMDGYHGVSLADWVCLVNNESDFNTKAINRNKGI. Residue Glu35 is part of the active site.

It belongs to the glycosyl hydrolase 22 family. In terms of assembly, monomer.

It localises to the secreted. The enzyme catalyses Hydrolysis of (1-&gt;4)-beta-linkages between N-acetylmuramic acid and N-acetyl-D-glucosamine residues in a peptidoglycan and between N-acetyl-D-glucosamine residues in chitodextrins.. Its function is as follows. Lysozymes have primarily a bacteriolytic function; those in tissues and body fluids are associated with the monocyte-macrophage system and enhance the activity of immunoagents. The polypeptide is Lysozyme C (LYZ) (Pseudocheirus peregrinus (Common ring-tailed possum)).